Consider the following 404-residue polypeptide: Probable tRNA sulfurtransferase (404 aa).

One can recognise a THUMP domain in the interval 61-166; the sequence is EAVSERLKDV…SGYSYIMCDE (106 aa). Residues 184–185, 209–210, Arg266, Gly288, and Gln297 contribute to the ATP site; these read LL and HF.

It belongs to the ThiI family.

Its subcellular location is the cytoplasm. It carries out the reaction [ThiI sulfur-carrier protein]-S-sulfanyl-L-cysteine + a uridine in tRNA + 2 reduced [2Fe-2S]-[ferredoxin] + ATP + H(+) = [ThiI sulfur-carrier protein]-L-cysteine + a 4-thiouridine in tRNA + 2 oxidized [2Fe-2S]-[ferredoxin] + AMP + diphosphate. The enzyme catalyses [ThiS sulfur-carrier protein]-C-terminal Gly-Gly-AMP + S-sulfanyl-L-cysteinyl-[cysteine desulfurase] + AH2 = [ThiS sulfur-carrier protein]-C-terminal-Gly-aminoethanethioate + L-cysteinyl-[cysteine desulfurase] + A + AMP + 2 H(+). It participates in cofactor biosynthesis; thiamine diphosphate biosynthesis. Its function is as follows. Catalyzes the ATP-dependent transfer of a sulfur to tRNA to produce 4-thiouridine in position 8 of tRNAs, which functions as a near-UV photosensor. Also catalyzes the transfer of sulfur to the sulfur carrier protein ThiS, forming ThiS-thiocarboxylate. This is a step in the synthesis of thiazole, in the thiamine biosynthesis pathway. The sulfur is donated as persulfide by IscS. The polypeptide is Probable tRNA sulfurtransferase (Bacillus cereus (strain ATCC 10987 / NRS 248)).